Reading from the N-terminus, the 174-residue chain is Flavodoxin (174 aa).

In terms of domain architecture, Flavodoxin-like spans 4–165; the sequence is VGLFYGSDTG…RVEKWCKQIY (162 aa).

It belongs to the flavodoxin family. The cofactor is FMN.

In terms of biological role, low-potential electron donor to a number of redox enzymes. The protein is Flavodoxin (fldA) of Haemophilus influenzae (strain ATCC 51907 / DSM 11121 / KW20 / Rd).